Here is a 197-residue protein sequence, read N- to C-terminus: Peptide deformylase (197 aa).

Positions 106 and 148 each coordinate Fe cation. Glu-149 is a catalytic residue. His-152 is a Fe cation binding site.

This sequence belongs to the polypeptide deformylase family. It depends on Fe(2+) as a cofactor.

The catalysed reaction is N-terminal N-formyl-L-methionyl-[peptide] + H2O = N-terminal L-methionyl-[peptide] + formate. Its function is as follows. Removes the formyl group from the N-terminal Met of newly synthesized proteins. Requires at least a dipeptide for an efficient rate of reaction. N-terminal L-methionine is a prerequisite for activity but the enzyme has broad specificity at other positions. This is Peptide deformylase from Mycolicibacterium gilvum (strain PYR-GCK) (Mycobacterium gilvum (strain PYR-GCK)).